The primary structure comprises 47 residues: Large ribosomal subunit protein eL40 (47 aa).

Belongs to the eukaryotic ribosomal protein eL40 family.

This chain is Large ribosomal subunit protein eL40, found in Methanococcus vannielii (strain ATCC 35089 / DSM 1224 / JCM 13029 / OCM 148 / SB).